The sequence spans 388 residues: Xylose isomerase (388 aa).

Catalysis depends on residues H54 and D57. Residues E181, E217, H220, D245, D255, D257, and D287 each contribute to the Mg(2+) site.

This sequence belongs to the xylose isomerase family. As to quaternary structure, homotetramer. Mg(2+) is required as a cofactor.

It is found in the cytoplasm. The enzyme catalyses alpha-D-xylose = alpha-D-xylulofuranose. The polypeptide is Xylose isomerase (Streptomyces corchorusii (Streptomyces chibaensis)).